A 256-amino-acid chain; its full sequence is Small ribosomal subunit protein eS1 (256 aa).

Over residues 1–18 (MAVGKNKRLSKGKKGVKK) the composition is skewed to basic residues. Residues 1–21 (MAVGKNKRLSKGKKGVKKRTV) form a disordered region. An N-acetylalanine; partial modification is found at Ala2.

The protein belongs to the eukaryotic ribosomal protein eS1 family. Component of the small ribosomal subunit. Mature ribosomes consist of a small (40S) and a large (60S) subunit. The 40S subunit contains about 33 different proteins and 1 molecule of RNA (18S). The 60S subunit contains about 49 different proteins and 3 molecules of RNA (25S, 5.8S and 5S).

It is found in the cytoplasm. This Neosartorya fischeri (strain ATCC 1020 / DSM 3700 / CBS 544.65 / FGSC A1164 / JCM 1740 / NRRL 181 / WB 181) (Aspergillus fischerianus) protein is Small ribosomal subunit protein eS1 (rps1).